A 198-amino-acid polypeptide reads, in one-letter code: Glycerol-3-phosphate acyltransferase (198 aa).

Transmembrane regions (helical) follow at residues 5–25 (AVIL…GYLI), 114–134 (VLIM…IAVL), and 154–176 (AFAL…LVAV).

The protein belongs to the PlsY family. As to quaternary structure, probably interacts with PlsX.

Its subcellular location is the cell membrane. The catalysed reaction is an acyl phosphate + sn-glycerol 3-phosphate = a 1-acyl-sn-glycero-3-phosphate + phosphate. It participates in lipid metabolism; phospholipid metabolism. In terms of biological role, catalyzes the transfer of an acyl group from acyl-phosphate (acyl-PO(4)) to glycerol-3-phosphate (G3P) to form lysophosphatidic acid (LPA). This enzyme utilizes acyl-phosphate as fatty acyl donor, but not acyl-CoA or acyl-ACP. This Desulforudis audaxviator (strain MP104C) protein is Glycerol-3-phosphate acyltransferase.